We begin with the raw amino-acid sequence, 911 residues long: DNA ligase 4 (911 aa).

Residues glutamate 271, threonine 272, lysine 273, leucine 274, arginine 278, glutamate 331, lysine 345, phenylalanine 367, glutamate 427, lysine 432, lysine 449, and lysine 451 each coordinate ATP. Catalysis depends on lysine 273, which acts as the N6-AMP-lysine intermediate. Glutamate 331 serves as a coordination point for Mg(2+). A Mg(2+)-binding site is contributed by glutamate 427. The required for catalytic activity stretch occupies residues 610–620 (LASKHLYIGGD). BRCT domains lie at 654 to 743 (KISN…PRFM) and 808 to 911 (SPLS…QYLI).

It belongs to the ATP-dependent DNA ligase family. In terms of assembly, interacts with XRCC4; the LIG4-XRCC4 subcomplex has a 1:2 stoichiometry and XRCC4 is required for LIG4 stability. Component of the core long-range non-homologous end joining (NHEJ) complex (also named DNA-PK complex) composed of PRKDC, LIG4, XRCC4, XRCC6/Ku70, XRCC5/Ku86 and NHEJ1/XLF. Additional component of the NHEJ complex includes PAXX. Following autophosphorylation, PRKDC dissociates from DNA, leading to formation of the short-range NHEJ complex, composed of LIG4, XRCC4, XRCC6/Ku70, XRCC5/Ku86 and NHEJ1/XLF. Interacts with DCLRE1C; the interaction is direct. Interacts with APLF. Mg(2+) serves as cofactor. In terms of tissue distribution, testis, thymus, prostate and heart.

It localises to the nucleus. The enzyme catalyses ATP + (deoxyribonucleotide)n-3'-hydroxyl + 5'-phospho-(deoxyribonucleotide)m = (deoxyribonucleotide)n+m + AMP + diphosphate.. DNA ligase involved in DNA non-homologous end joining (NHEJ); required for double-strand break (DSB) repair and V(D)J recombination. Catalyzes the NHEJ ligation step of the broken DNA during DSB repair by resealing the DNA breaks after the gap filling is completed. Joins single-strand breaks in a double-stranded polydeoxynucleotide in an ATP-dependent reaction. LIG4 is mechanistically flexible: it can ligate nicks as well as compatible DNA overhangs alone, while in the presence of XRCC4, it can ligate ends with 2-nucleotides (nt) microhomology and 1-nt gaps. Forms a subcomplex with XRCC4; the LIG4-XRCC4 subcomplex is responsible for the NHEJ ligation step and XRCC4 enhances the joining activity of LIG4. Binding of the LIG4-XRCC4 complex to DNA ends is dependent on the assembly of the DNA-dependent protein kinase complex DNA-PK to these DNA ends. LIG4 regulates nuclear localization of XRCC4. This chain is DNA ligase 4, found in Homo sapiens (Human).